We begin with the raw amino-acid sequence, 107 residues long: Thioredoxin 1 (107 aa).

The Thioredoxin domain maps to 2-107 (SAAAQVTDST…TLSQTLEKHL (106 aa)). An intrachain disulfide couples cysteine 32 to cysteine 35.

Belongs to the thioredoxin family.

Participates in various redox reactions through the reversible oxidation of its active center dithiol to a disulfide and catalyzes dithiol-disulfide exchange reactions. This is Thioredoxin 1 (trxA) from Nostoc sp. (strain PCC 7120 / SAG 25.82 / UTEX 2576).